The primary structure comprises 542 residues: Chromatin structure-remodeling complex subunit rsc4 (542 aa).

Positions 6–116 (HNAPFDKTKF…NTANSLESKD (111 aa)) constitute a Bromo 1 domain. 2 disordered regions span residues 114 to 139 (SKDG…KPGT) and 246 to 327 (ISSF…PIPE). A compositionally biased stretch (acidic residues) spans 119–128 (LNEEENEEME). The Bromo 2 domain maps to 139-249 (TNEIDVPKVI…QLSSSLISSF (111 aa)). Positions 252–266 (QPKEHSPATSKHEPE) are enriched in basic and acidic residues. Ser257, Ser271, Ser287, and Ser313 each carry phosphoserine. A compositionally biased stretch (low complexity) spans 268-280 (TPASPTPSVSAST). Positions 286-298 (TSVAPSFITSDQA) are enriched in polar residues. A compositionally biased stretch (basic and acidic residues) spans 304 to 322 (LKSEEAHVESFSKESEKDQ).

Component of the RSC complex composed of at least arp9, arp42, rsc1, rsc4, rsc7, rsc9, rsc58, sfh1, snf21, ssr1, ssr2, ssr3 and ssr4. The complex interacts with histone and histone variant components of centromeric chromatin.

It localises to the nucleus. Functionally, component of the chromatin structure remodeling complex (RSC), which is involved in transcription regulation and nucleosome positioning. Controls particularly membrane and organelle development genes. The polypeptide is Chromatin structure-remodeling complex subunit rsc4 (rsc4) (Schizosaccharomyces pombe (strain 972 / ATCC 24843) (Fission yeast)).